The sequence spans 100 residues: Small ribosomal subunit protein uS17 (100 aa).

This sequence belongs to the universal ribosomal protein uS17 family. Part of the 30S ribosomal subunit.

In terms of biological role, one of the primary rRNA binding proteins, it binds specifically to the 5'-end of 16S ribosomal RNA. The sequence is that of Small ribosomal subunit protein uS17 from Fervidobacterium nodosum (strain ATCC 35602 / DSM 5306 / Rt17-B1).